The following is a 540-amino-acid chain: 2,3-bisphosphoglycerate-independent phosphoglycerate mutase (540 aa).

The Mn(2+) site is built by Asp13 and Ser63. The active-site Phosphoserine intermediate is Ser63. Residues His124, 154-155 (RD), Arg186, Arg192, 262-265 (RPDR), and Lys356 each bind substrate. 5 residues coordinate Mn(2+): Asp423, His427, Asp464, His465, and His483.

This sequence belongs to the BPG-independent phosphoglycerate mutase family. As to quaternary structure, monomer. It depends on Mn(2+) as a cofactor.

The catalysed reaction is (2R)-2-phosphoglycerate = (2R)-3-phosphoglycerate. It participates in carbohydrate degradation; glycolysis; pyruvate from D-glyceraldehyde 3-phosphate: step 3/5. In terms of biological role, catalyzes the interconversion of 2-phosphoglycerate and 3-phosphoglycerate. This Chloroflexus aurantiacus (strain ATCC 29366 / DSM 635 / J-10-fl) protein is 2,3-bisphosphoglycerate-independent phosphoglycerate mutase.